Here is a 156-residue protein sequence, read N- to C-terminus: Phosphopantetheine adenylyltransferase (156 aa).

Thr-10 is a substrate binding site. Residues 10–11 (TF) and His-18 contribute to the ATP site. Substrate-binding residues include Lys-42, Leu-74, and Arg-88. Residues 89–91 (GLR), Glu-99, and 124–130 (NAFISSS) contribute to the ATP site.

This sequence belongs to the bacterial CoaD family. As to quaternary structure, homohexamer. It depends on Mg(2+) as a cofactor.

It localises to the cytoplasm. It catalyses the reaction (R)-4'-phosphopantetheine + ATP + H(+) = 3'-dephospho-CoA + diphosphate. It participates in cofactor biosynthesis; coenzyme A biosynthesis; CoA from (R)-pantothenate: step 4/5. Reversibly transfers an adenylyl group from ATP to 4'-phosphopantetheine, yielding dephospho-CoA (dPCoA) and pyrophosphate. The polypeptide is Phosphopantetheine adenylyltransferase (Campylobacter concisus (strain 13826)).